The primary structure comprises 274 residues: Large ribosomal subunit protein uL2 (274 aa).

Residues 223-274 (VAMNPVDHPHGGGEGRTSGGRHPVSPWGMPTKGFKTRKNKSTDKYIVRRRNK) are disordered.

This sequence belongs to the universal ribosomal protein uL2 family. Part of the 50S ribosomal subunit. Forms a bridge to the 30S subunit in the 70S ribosome.

Its function is as follows. One of the primary rRNA binding proteins. Required for association of the 30S and 50S subunits to form the 70S ribosome, for tRNA binding and peptide bond formation. It has been suggested to have peptidyltransferase activity; this is somewhat controversial. Makes several contacts with the 16S rRNA in the 70S ribosome. This Aliivibrio fischeri (strain ATCC 700601 / ES114) (Vibrio fischeri) protein is Large ribosomal subunit protein uL2.